We begin with the raw amino-acid sequence, 305 residues long: Methionyl-tRNA formyltransferase (305 aa).

A (6S)-5,6,7,8-tetrahydrofolate-binding site is contributed by Ser-111–Pro-114.

The protein belongs to the Fmt family.

The catalysed reaction is L-methionyl-tRNA(fMet) + (6R)-10-formyltetrahydrofolate = N-formyl-L-methionyl-tRNA(fMet) + (6S)-5,6,7,8-tetrahydrofolate + H(+). Its function is as follows. Attaches a formyl group to the free amino group of methionyl-tRNA(fMet). The formyl group appears to play a dual role in the initiator identity of N-formylmethionyl-tRNA by promoting its recognition by IF2 and preventing the misappropriation of this tRNA by the elongation apparatus. The sequence is that of Methionyl-tRNA formyltransferase from Campylobacter jejuni subsp. jejuni serotype O:2 (strain ATCC 700819 / NCTC 11168).